The primary structure comprises 419 residues: Oxamate carbamoyltransferase subunit AllG (419 aa).

This sequence belongs to the AllG family. In terms of assembly, the OXTCase is composed of 3 subunits, AllF, AllG and AllH. Mg(2+) is required as a cofactor.

The catalysed reaction is oxamate + carbamoyl phosphate = N-carbamoyl-2-oxoglycine + phosphate. It participates in nitrogen metabolism; (S)-allantoin degradation. Its function is as follows. Component of a carbamoyltransferase involved in the anaerobic nitrogen utilization via the assimilation of allantoin. Catalyzes the conversion of oxalurate (N-carbamoyl-2-oxoglycine) to oxamate and carbamoyl phosphate. The protein is Oxamate carbamoyltransferase subunit AllG of Escherichia coli (strain K12).